Reading from the N-terminus, the 148-residue chain is Basic leucine zipper 4 (148 aa).

Residues 48-97 (DDKKRRRTISNRESAKRSRMKKKKRFEELTEEVNRLNIRNQELKNRLANV) enclose the bZIP domain. A disordered region spans residues 50–70 (KKRRRTISNRESAKRSRMKKK). Residues 50–72 (KKRRRTISNRESAKRSRMKKKKR) are basic motif. Residues 76–90 (LTEEVNRLNIRNQEL) are leucine-zipper.

The protein localises to the nucleus. Functionally, probable transcription factor involved in somatic embryogenesis. Acts as a positive regulator of BHLH109. This is Basic leucine zipper 4 from Arabidopsis thaliana (Mouse-ear cress).